We begin with the raw amino-acid sequence, 323 residues long: Protein MEI2-like 6 (323 aa).

The sequence is that of Protein MEI2-like 6 (ML6) from Oryza sativa subsp. japonica (Rice).